Reading from the N-terminus, the 329-residue chain is Protein-arginine N-acetylglucosaminyltransferase NleB (329 aa).

N-beta-linked (GlcNAc) arginine; by autocatalysis glycosylation is present at Arg-13. Position 48–50 (Gln-48–Phe-50) interacts with UDP-N-acetyl-alpha-D-glucosamine. A glycan (N-beta-linked (GlcNAc) arginine; by autocatalysis) is linked at Arg-53. Tyr-72 serves as a coordination point for UDP-N-acetyl-alpha-D-glucosamine. Residue Arg-159 is glycosylated (N-beta-linked (GlcNAc) arginine; by autocatalysis). Tyr-219–Ala-222 is a binding site for UDP-N-acetyl-alpha-D-glucosamine. The DXD motif signature appears at Asp-221–Asp-223. Asp-223 is a Mn(2+) binding site. Glu-253 functions as the Proton acceptor in the catalytic mechanism. Arg-293 carries N-beta-linked (GlcNAc) arginine; by autocatalysis glycosylation. Asn-320 and Ser-322 together coordinate Mn(2+). Residues Ser-322 and Ser-327–Trp-329 each bind UDP-N-acetyl-alpha-D-glucosamine.

Belongs to the glycosyltransferase NleB family. The cofactor is Mn(2+). In terms of processing, auto-glycosylated: arginine GlcNAcylation is required for activity toward death domain-containing host target proteins.

Its subcellular location is the secreted. The protein localises to the host cell. It carries out the reaction L-arginyl-[protein] + UDP-N-acetyl-alpha-D-glucosamine = N(omega)-(N-acetyl-beta-D-glucosaminyl)-L-arginyl-[protein] + UDP + H(+). Functionally, protein-arginine N-acetylglucosaminyltransferase effector that disrupts TNF signaling in infected cells, including NF-kappa-B signaling, apoptosis and necroptosis. Acts by catalyzing the transfer of a single N-acetylglucosamine (GlcNAc) to a conserved arginine residue in the death domain of host proteins FADD, TNFRSF1A and RIPK1: arginine GlcNAcylation prevents homotypic/heterotypic death domain interactions and assembly of the oligomeric TNF-alpha receptor complex, thereby disrupting TNF signaling. Has preference for host FADD as substrate compared to TNFRSF1A and RIPK1. Also acts on host proteins without a death domain: catalyzes GlcNAcylation of host GAPDH protein, thereby preventing GAPDH interaction with TRAF2 and TRAF3, leading to inhibit NF-kappa-B signaling and type I interferon production, respectively. Also displays intra-bacterial activity by mediating GlcNAcylation of glutathione synthetase GshB. Catalyzes auto-GlcNAcylation, which is required for activity toward death domain-containing host target proteins. In Citrobacter rodentium, this protein is Protein-arginine N-acetylglucosaminyltransferase NleB.